The primary structure comprises 396 residues: Elongation factor Tu 1 (396 aa).

Positions 10 to 206 constitute a tr-type G domain; it reads KPHCNVGTIG…AVDDYIPQPE (197 aa). Positions 19-26 are G1; that stretch reads GHVDHGKT. 19–26 is a binding site for GTP; the sequence is GHVDHGKT. Thr26 contacts Mg(2+). Residues 60–64 are G2; sequence GITIS. The segment at 81–84 is G3; sequence DCPG. Residues 81 to 85 and 136 to 139 contribute to the GTP site; these read DCPGH and NKCD. The tract at residues 136–139 is G4; that stretch reads NKCD. Residues 174-176 form a G5 region; sequence SAL.

It belongs to the TRAFAC class translation factor GTPase superfamily. Classic translation factor GTPase family. EF-Tu/EF-1A subfamily. In terms of assembly, monomer.

Its subcellular location is the cytoplasm. It catalyses the reaction GTP + H2O = GDP + phosphate + H(+). Functionally, GTP hydrolase that promotes the GTP-dependent binding of aminoacyl-tRNA to the A-site of ribosomes during protein biosynthesis. The protein is Elongation factor Tu 1 of Rhodospirillum rubrum (strain ATCC 11170 / ATH 1.1.1 / DSM 467 / LMG 4362 / NCIMB 8255 / S1).